Consider the following 526-residue polypeptide: Chaperonin GroEL 2 (526 aa).

Residues Lys50, Gly413, and Asp494 each contribute to the ATP site.

This sequence belongs to the chaperonin (HSP60) family. As to quaternary structure, forms a cylinder of 14 subunits composed of two heptameric rings stacked back-to-back. Interacts with the co-chaperonin GroES.

The protein localises to the cytoplasm. It carries out the reaction ATP + H2O + a folded polypeptide = ADP + phosphate + an unfolded polypeptide.. In terms of biological role, together with its co-chaperonin GroES, plays an essential role in assisting protein folding. The GroEL-GroES system forms a nano-cage that allows encapsulation of the non-native substrate proteins and provides a physical environment optimized to promote and accelerate protein folding. The polypeptide is Chaperonin GroEL 2 (Chlamydia pneumoniae (Chlamydophila pneumoniae)).